A 159-amino-acid chain; its full sequence is Eukaryotic translation initiation factor 5A (159 aa).

Lysine 55 bears the Hypusine mark.

This sequence belongs to the eIF-5A family. Post-translationally, lys-55 undergoes hypusination, a unique post-translational modification that consists in the addition of a butylamino group from spermidine to lysine side chain, leading to the formation of the unusual amino acid hypusine. eIF-5As are the only known proteins to undergo this modification, which is essential for their function.

The protein resides in the cytoplasm. Functionally, translation factor that promotes translation elongation and termination, particularly upon ribosome stalling at specific amino acid sequence contexts. Binds between the exit (E) and peptidyl (P) site of the ribosome and promotes rescue of stalled ribosome: specifically required for efficient translation of polyproline-containing peptides as well as other motifs that stall the ribosome. Acts as a ribosome quality control (RQC) cofactor by joining the RQC complex to facilitate peptidyl transfer during CAT tailing step. The sequence is that of Eukaryotic translation initiation factor 5A (eif5a) from Dictyostelium discoideum (Social amoeba).